The following is a 62-amino-acid chain: DNA-binding protein 7b (62 aa).

This sequence belongs to the 7 kDa DNA-binding/endoribonuclease P2 family. As to quaternary structure, monomer.

It is found in the cytoplasm. Functionally, can constrain negative DNA supercoils. May be involved in maintaining the integrity of the genome at high temperature. The sequence is that of DNA-binding protein 7b from Acidianus hospitalis (strain W1).